A 394-amino-acid polypeptide reads, in one-letter code: Ribulose bisphosphate carboxylase large chain (394 aa).

At K5 the chain carries N6,N6,N6-trimethyllysine. Substrate-binding residues include N114 and T164. Catalysis depends on K166, which acts as the Proton acceptor. K168 is a binding site for substrate. 3 residues coordinate Mg(2+): K192, D194, and E195. Position 192 is an N6-carboxylysine (K192). H285 functions as the Proton acceptor in the catalytic mechanism. Substrate-binding residues include R286, H318, and S370.

This sequence belongs to the RuBisCO large chain family. Type I subfamily. As to quaternary structure, heterohexadecamer of 8 large chains and 8 small chains. It depends on Mg(2+) as a cofactor.

Its subcellular location is the plastid. The protein resides in the chloroplast. The catalysed reaction is 2 (2R)-3-phosphoglycerate + 2 H(+) = D-ribulose 1,5-bisphosphate + CO2 + H2O. It catalyses the reaction D-ribulose 1,5-bisphosphate + O2 = 2-phosphoglycolate + (2R)-3-phosphoglycerate + 2 H(+). RuBisCO catalyzes two reactions: the carboxylation of D-ribulose 1,5-bisphosphate, the primary event in carbon dioxide fixation, as well as the oxidative fragmentation of the pentose substrate in the photorespiration process. Both reactions occur simultaneously and in competition at the same active site. The sequence is that of Ribulose bisphosphate carboxylase large chain (rbcL) from Cabomba caroliniana (Carolina fanwort).